Here is a 509-residue protein sequence, read N- to C-terminus: Zinc metalloproteinase aureolysin (509 aa).

A signal peptide spans methionine 1–alanine 27. A propeptide spanning residues serine 28–glutamate 208 is cleaved from the precursor. Aspartate 348 contacts Ca(2+). Zn(2+) is bound at residue histidine 352. The active site involves glutamate 353. Histidine 356 and glutamate 376 together coordinate Zn(2+). Ca(2+) contacts are provided by aspartate 387, glutamate 389, aspartate 390, leucine 392, glutamate 395, tyrosine 398, threonine 399, lysine 402, and aspartate 405. Catalysis depends on histidine 436, which acts as the Proton donor.

It belongs to the peptidase M4 family. As to quaternary structure, monomer. Requires Ca(2+) as cofactor. The cofactor is Zn(2+).

It catalyses the reaction Cleavage of insulin B chain with specificity similar to that of thermolysin, preferring hydrophobic P1' residues. Activates the glutamyl endopeptidase (EC 3.4.21.19) of Staphylococcus aureus.. In terms of biological role, plays an essential role in immune evasion by helping bacteria to resist complement-mediated killing by neutrophils. Inhibits the deposition of host C3b on bacterial surfaces and the release of the chemoattractant C5a by cleaving the central complement protein C3. The cleavage site renders the C3b molecule vulnerable to proteolytic degradation by host regulators. Cleaves and inactivates host SERPINA1, which is an endogenous protease inhibitor essential for controlling neutrophil serine protease elastase. Also plays an essential role in the cleavage and subsequent activation of the serine protease SspA (glutamyl endopeptidase) which is involved in colonization and infection of human tissues. This chain is Zinc metalloproteinase aureolysin, found in Staphylococcus aureus.